The sequence spans 491 residues: Protein nucleotidyltransferase YdiU (491 aa).

ATP-binding residues include glycine 94, glycine 96, arginine 97, lysine 117, aspartate 129, glycine 130, arginine 180, and arginine 187. Catalysis depends on aspartate 256, which acts as the Proton acceptor. The Mg(2+) site is built by asparagine 257 and aspartate 266. ATP is bound at residue aspartate 266.

This sequence belongs to the SELO family. Mg(2+) serves as cofactor. Requires Mn(2+) as cofactor.

The enzyme catalyses L-seryl-[protein] + ATP = 3-O-(5'-adenylyl)-L-seryl-[protein] + diphosphate. The catalysed reaction is L-threonyl-[protein] + ATP = 3-O-(5'-adenylyl)-L-threonyl-[protein] + diphosphate. It catalyses the reaction L-tyrosyl-[protein] + ATP = O-(5'-adenylyl)-L-tyrosyl-[protein] + diphosphate. It carries out the reaction L-histidyl-[protein] + UTP = N(tele)-(5'-uridylyl)-L-histidyl-[protein] + diphosphate. The enzyme catalyses L-seryl-[protein] + UTP = O-(5'-uridylyl)-L-seryl-[protein] + diphosphate. The catalysed reaction is L-tyrosyl-[protein] + UTP = O-(5'-uridylyl)-L-tyrosyl-[protein] + diphosphate. Functionally, nucleotidyltransferase involved in the post-translational modification of proteins. It can catalyze the addition of adenosine monophosphate (AMP) or uridine monophosphate (UMP) to a protein, resulting in modifications known as AMPylation and UMPylation. This is Protein nucleotidyltransferase YdiU from Clostridium botulinum (strain Okra / Type B1).